The following is a 215-amino-acid chain: Cytochrome b6 (215 aa).

At 1-31 (MANVYDWFQERLEIQALADDVTSKYVPPHVN) the chain is on the cytoplasmic side. Residues 32–52 (IFYCLGGITLTCFLIQFATGF) traverse the membrane as a helical segment. Position 35 (Cys-35) interacts with heme c. The Lumenal, thylakoid portion of the chain corresponds to 53–89 (AMTFYYKPTVTEAYASVQYIMNEVSFGWLIRSIHRWS). Residues Arg-83, His-86, His-100, and Arg-103 each contribute to the heme b site. Residues 90–110 (ASMMVLMMILHVFRVYLTGGF) form a helical membrane-spanning segment. Over 111-115 (KKPRE) the chain is Cytoplasmic. Residues 116–136 (LTWISGVILAVITVSFGVTGY) form a helical membrane-spanning segment. Residues 137–185 (SLPWDQVGYWAVKIVSGVPEAIPVVGVLISDLLRGGSSVGQATLTRYYS) lie on the Lumenal, thylakoid side of the membrane. A helical membrane pass occupies residues 186-206 (AHTFVLPWLIAVFMLLHFLMI). Residues His-187 and His-202 each coordinate heme b. Over 207–215 (RKQGISGPL) the chain is Cytoplasmic. Heme c is bound at residue Lys-208.

Belongs to the cytochrome b family. PetB subfamily. The 4 large subunits of the cytochrome b6-f complex are cytochrome b6, subunit IV (17 kDa polypeptide, PetD), cytochrome f and the Rieske protein, while the 4 small subunits are PetG, PetL, PetM and PetN. The complex functions as a dimer. Requires heme b as cofactor. Heme c serves as cofactor.

The protein resides in the cellular thylakoid membrane. In terms of biological role, component of the cytochrome b6-f complex, which mediates electron transfer between photosystem II (PSII) and photosystem I (PSI), cyclic electron flow around PSI, and state transitions. This chain is Cytochrome b6, found in Mastigocladus laminosus (Fischerella sp.).